We begin with the raw amino-acid sequence, 176 residues long: Ribosome rescue factor SmrB (176 aa).

In terms of domain architecture, Smr spans 93 to 168; it reads LDLHGYRQSE…GDAALLVLID (76 aa).

This sequence belongs to the SmrB family. In terms of assembly, associates with collided ribosomes, but not with correctly translating polysomes.

Functionally, acts as a ribosome collision sensor. Detects stalled/collided disomes (pairs of ribosomes where the leading ribosome is stalled and a second ribosome has collided with it) and endonucleolytically cleaves mRNA at the 5' boundary of the stalled ribosome. Stalled/collided disomes form a new interface (primarily via the 30S subunits) that binds SmrB. Cleaved mRNA becomes available for tmRNA ligation, leading to ribosomal subunit dissociation and rescue of stalled ribosomes. The polypeptide is Ribosome rescue factor SmrB (Shewanella putrefaciens (strain CN-32 / ATCC BAA-453)).